We begin with the raw amino-acid sequence, 207 residues long: Urease accessory protein UreG (207 aa).

GTP is bound at residue 13–20 (GPVGSGKT).

It belongs to the SIMIBI class G3E GTPase family. UreG subfamily. Homodimer. UreD, UreF and UreG form a complex that acts as a GTP-hydrolysis-dependent molecular chaperone, activating the urease apoprotein by helping to assemble the nickel containing metallocenter of UreC. The UreE protein probably delivers the nickel.

The protein resides in the cytoplasm. Its function is as follows. Facilitates the functional incorporation of the urease nickel metallocenter. This process requires GTP hydrolysis, probably effectuated by UreG. This is Urease accessory protein UreG from Azoarcus sp. (strain BH72).